Consider the following 1736-residue polypeptide: Centrosomal protein of 152 kDa (1736 aa).

The segment at 1–60 is interaction with PLK4; the sequence is MSLEFGSVALQTQNEDEEFDKEDFEREKELQQLLTDLPHDMLDDELSSPERHDSDCSMDG. Residues 1-127 are disordered; sequence MSLEFGSVAL…SGYSPPGKRE (127 aa). 2 stretches are compositionally biased toward basic and acidic residues: residues 61-82 and 94-105; these read RAAE…DILP and EENRSKTEDQHL. 6 coiled-coil regions span residues 228–481, 552–651, 692–776, 835–868, 950–1075, and 1205–1315; these read IIQL…AELG, HLVS…QEFD, LEVY…TERQ, AAVS…ALRK, NVMS…YEED, and GHCF…KIKR. The tract at residues 571–592 is disordered; sequence FQQSKDGDSGMETKTDTSEKTT. The span at 575–592 shows a compositional bias: basic and acidic residues; that stretch reads KDGDSGMETKTDTSEKTT. At T1277 the chain carries Phosphothreonine. Disordered regions lie at residues 1416 to 1479, 1543 to 1562, 1574 to 1614, and 1677 to 1736; these read GTER…ASTA, EKNS…LRSP, GSPT…SDST, and QQGK…SPLE. A compositionally biased stretch (basic and acidic residues) spans 1462–1473; sequence RRLEESKHREMR. 2 stretches are compositionally biased toward polar residues: residues 1576 to 1595 and 1603 to 1614; these read PTET…SQDS and PSSSPAWPSDST. K1714 bears the N6-acetyllysine mark.

It belongs to the CEP152 family. Interacts (via N-terminus) with PLK4; the interaction is mutally exclusive with a PLK4:CEP192 interaction. Interacts (via C-terminus) with CPAP (via-N-terminus). Interacts with CINP. Interacts with CDK5RAP2, WDR62, CEP63 and CEP131. CEP63, CDK5RAP2, CEP152, WDR62 are proposed to form a stepwise assembled complex at the centrosome forming a ring near parental centrioles. Interacts with DEUP1; this interaction recruits CEP152 to the deuterosome. The interactions with CEP63 and DEUP1 are mutually exclusive. Interacts with CCDC66.

The protein localises to the cytoplasm. It is found in the cytoskeleton. It localises to the microtubule organizing center. Its subcellular location is the centrosome. The protein resides in the centriole. Functionally, necessary for centrosome duplication; the function also seems to involve CEP63, CDK5RAP2 and WDR62 through a stepwise assembled complex at the centrosome that recruits CDK2 required for centriole duplication. Acts as a molecular scaffold facilitating the interaction of PLK4 and CPAP, 2 molecules involved in centriole formation. Proposed to snatch PLK4 away from PLK4:CEP92 complexes in early G1 daughter centriole and to reposition PLK4 at the outer boundary of a newly forming CEP152 ring structure. Also plays a key role in deuterosome-mediated centriole amplification in multiciliated that can generate more than 100 centrioles. Overexpression of cep152 can drive amplification of centrioles. The polypeptide is Centrosomal protein of 152 kDa (Cep152) (Mus musculus (Mouse)).